We begin with the raw amino-acid sequence, 870 residues long: Protein translocase subunit SecA (870 aa).

Residues glutamine 86, 104 to 108, and aspartate 499 contribute to the ATP site; that span reads GEGKT. Zn(2+) is bound by residues cysteine 854, cysteine 856, cysteine 865, and histidine 866.

The protein belongs to the SecA family. Monomer and homodimer. Part of the essential Sec protein translocation apparatus which comprises SecA, SecYEG and auxiliary proteins SecDF-YajC and YidC. Zn(2+) serves as cofactor.

The protein resides in the cell inner membrane. The protein localises to the cytoplasm. It carries out the reaction ATP + H2O + cellular proteinSide 1 = ADP + phosphate + cellular proteinSide 2.. Functionally, part of the Sec protein translocase complex. Interacts with the SecYEG preprotein conducting channel. Has a central role in coupling the hydrolysis of ATP to the transfer of proteins into and across the cell membrane, serving both as a receptor for the preprotein-SecB complex and as an ATP-driven molecular motor driving the stepwise translocation of polypeptide chains across the membrane. This chain is Protein translocase subunit SecA, found in Ehrlichia ruminantium (strain Welgevonden).